The primary structure comprises 395 residues: Na(+)/H(+) antiporter NhaA (395 aa).

The next 11 helical transmembrane spans lie at 11 to 31, 61 to 81, 96 to 116, 127 to 147, 156 to 176, 179 to 199, 215 to 237, 262 to 282, 295 to 315, 334 to 354, and 366 to 386; these read FQLEAASGLLLIAAAILALII, LLLWINDGLMALFFLLIGLEV, IVLPGAAAIGGMLVPALIYWF, GWAIPTATDIAFALGVLALLG, LFLMTLAIIDDLGAIVIIAIF, GELSTLSLGLAAACIAALVAM, LILWVCVLKSGVHATLAGVTLAF, VAYGILPLFAFANAGLSLSGV, IAVGLLLGKTLGVFGLTWLAV, VAILCGIGFTMSLFVGSLAFV, and MGILTGSVFAALIGYAVTAAA.

The protein belongs to the NhaA Na(+)/H(+) (TC 2.A.33) antiporter family.

The protein localises to the cell inner membrane. It carries out the reaction Na(+)(in) + 2 H(+)(out) = Na(+)(out) + 2 H(+)(in). Functionally, na(+)/H(+) antiporter that extrudes sodium in exchange for external protons. In Pseudomonas fluorescens (strain Pf0-1), this protein is Na(+)/H(+) antiporter NhaA.